Here is an 85-residue protein sequence, read N- to C-terminus: Large ribosomal subunit protein bL27 (85 aa).

Residues methionine 1–glycine 22 are disordered.

The protein belongs to the bacterial ribosomal protein bL27 family.

In Geobacter metallireducens (strain ATCC 53774 / DSM 7210 / GS-15), this protein is Large ribosomal subunit protein bL27.